A 624-amino-acid polypeptide reads, in one-letter code: Phosphomethylpyrimidine synthase (624 aa).

The disordered stretch occupies residues 75-99 (SPWIESRGDTESYTGRTPFALDDGL). Substrate-binding positions include Asn226, Met255, Tyr284, His320, 340 to 342 (SRG), 381 to 384 (DGLR), and Glu420. Residue His424 participates in Zn(2+) binding. Substrate is bound at residue Tyr447. His488 is a Zn(2+) binding site. [4Fe-4S] cluster-binding residues include Cys568, Cys571, and Cys576.

The protein belongs to the ThiC family. In terms of assembly, homodimer. It depends on [4Fe-4S] cluster as a cofactor.

The catalysed reaction is 5-amino-1-(5-phospho-beta-D-ribosyl)imidazole + S-adenosyl-L-methionine = 4-amino-2-methyl-5-(phosphooxymethyl)pyrimidine + CO + 5'-deoxyadenosine + formate + L-methionine + 3 H(+). The protein operates within cofactor biosynthesis; thiamine diphosphate biosynthesis. Catalyzes the synthesis of the hydroxymethylpyrimidine phosphate (HMP-P) moiety of thiamine from aminoimidazole ribotide (AIR) in a radical S-adenosyl-L-methionine (SAM)-dependent reaction. This is Phosphomethylpyrimidine synthase from Albidiferax ferrireducens (strain ATCC BAA-621 / DSM 15236 / T118) (Rhodoferax ferrireducens).